The primary structure comprises 266 residues: ATG8-interacting protein 2 (266 aa).

Positions 14–17 (WEVV) match the AIM (Atg8-family-interacting motif) motif. The chain crosses the membrane as a helical span at residues 191-210 (TNTVWSICIAAAVMGIVILG). The AIM (Atg8-family-interacting motif) motif lies at 218–221 (WQIL).

As to quaternary structure, interacts with ATG8F.

It is found in the endoplasmic reticulum membrane. The protein localises to the membrane. Its function is as follows. May be involved in salt stress-induced vesicle-to-vacuole trafficking pathway. Through its interaction with ATG8F, may enable delivery of the vesicle bodies to the vacuole by an autophagic pathway. Plays a role in seed germination in response to exogenous abscisic acid (ABA) treatment. This chain is ATG8-interacting protein 2, found in Arabidopsis thaliana (Mouse-ear cress).